We begin with the raw amino-acid sequence, 1477 residues long: MKKDREAQLCLFSALLAFLPFASLLNGNSKYMVLVPSQLYTETPEKICLHLYHLNETVTVTASLISQRGTRKLFDELVVDKDLFHCVSFTIPRLPSSEEEESLDINIEGAKHKFSERRVVLVKNKESVVFVQTDKPMYKPGQSVKFRVVSMDKNLHPLNELFPLAYIEDPKMNRIMQWQDVKTENGLKQLSFSLSAEPIQGPYKIVILKQSGVKEEHSFTVMEFVLPRFGVDVKVPNAISVYDEIINVTACATYTYGKPVPGHVKISLCHGNPTFSSETKSGCKEEDSRLDNNGCSTQEVNITEFQLKENYLKMHQAFHVNATVTEEGTGSEFSGSGRIEVERTRNKFLFLKADSHFRHGIPFFVKVRLVDIKGDPIPNEQVLIKARDAGYTNATTTDQHGLAKFSIDTNGISDYSLNIKVYHKEESSCIHSSCTAERHAEAHHTAYAVYSLSKSYIYLDTEAGVLPCNQIHTVQAHFILKGQVLGVLQQIVFHYLVMAQGSILQTGNHTHQVEPGESQVQGNFALEIPVEFSMVPVAKMLIYTILPDGEVIADSVKFQVEKCLRNKVHLSFSPSQSLPASQTHMRVTASPQSLCGLRAVDQSVLLQKPEAELSPSLIYDLPGMQDSNFIASSNDPFEDEDYCLMYQPIAREKDVYRYVRETGLMAFTNLKIKLPTYCNTDYDMVPLAVPAVALDSSTDRGMYESLPVVAVKSPLPQEPPRKDPPPKDPVIETIRNYFPETWIWDLVTVNSSGVTELEMTVPDTITEWKAGALCLSNDTGLGLSSVASFQAFQPFFVELTMPYSVIRGEAFTLKATVLNYLPTSLPMAVLLEASPDFTAVPVENNQDSYCLGANGRHTSSWLVTPKSLGNVNFSVSAEARQSPGPCGSEVATVPETGRKDTVVKVLIVEPEGIKKEHTFSSLLCASDAELSETLSLLLPPTVVKDSARAHFSVMGDILSSAIKNTQNLIQMPYGCGEQNMVLFAPNIYVLKYLNETQQLTEKIKSKALGYLRAGYQRELNYKHKDGSYSAFGDHNGQGQGNTWLTAFVLKSFAQARAFIFIDESHITDAFTWLSKQQKDSGCFRSSGSLLNNAMKGGVDDEITLSAYITMALLESSLPDTDPVVSKALSCLESSWENIEQGGNGSFVYTKALMAYAFALAGNQEKRNEILKSLDKEAIKEDNSIHWERPQKPTKSEGYLYTPQASSAEVEMSAYVVLARLTAQPAPSPEDLALSMGTIKWLTKQQNSYGGFSSTQDTVVALDALSKYGAATFSKSQKTPSVTVQSSGSFSQKFQVDKSNRLLLQQVSLPYIPGNYTVSVSGEGCVYAQTTLRYNVPLEKQQPAFALKVQTVPLTCNNPKGQNSFQISLEISYMGSRPASNMVIADVKMLSGFIPLKPTVKKLERLGHVSRTEVTTNNVLLYLDQVTNQTLSFSFIIQQDIPVKNLQPAIVKVYDYYETDEVAFAEYSSPCSSDDQNV.

An N-terminal signal peptide occupies residues 1–24 (MKKDREAQLCLFSALLAFLPFASL). Cysteine 48 and cysteine 86 form a disulfide bridge. Residues asparagine 55 and asparagine 247 are each glycosylated (N-linked (GlcNAc...) asparagine). 2 cysteine pairs are disulfide-bonded: cysteine 251/cysteine 295 and cysteine 269/cysteine 283. N-linked (GlcNAc...) asparagine glycosylation is found at asparagine 301, asparagine 321, asparagine 393, and asparagine 508. Cystine bridges form between cysteine 468–cysteine 563, cysteine 595–cysteine 774, and cysteine 643–cysteine 678. The bait region (approximate) stretch occupies residues 601 to 750 (DQSVLLQKPE…TWIWDLVTVN (150 aa)). N-linked (GlcNAc...) asparagine glycosylation is found at asparagine 750, asparagine 777, and asparagine 872. Cystine bridges form between cysteine 850–cysteine 886, cysteine 924–cysteine 1324, cysteine 1082–cysteine 1130, and cysteine 1355–cysteine 1470. Residues 975-978 (CGEQ) constitute a cross-link (isoglutamyl cysteine thioester (Cys-Gln)). N-linked (GlcNAc...) asparagine glycosylation occurs at asparagine 994. Asparagine 1143, asparagine 1314, and asparagine 1427 each carry an N-linked (GlcNAc...) asparagine glycan.

The protein belongs to the protease inhibitor I39 (alpha-2-macroglobulin) family. Monomer.

Its subcellular location is the secreted. Its function is as follows. Protease inhibitor with a wide spectrum of protein targets, which attaches through its thioester function. In Rattus norvegicus (Rat), this protein is Alpha-1-inhibitor 3 (A1i3).